The following is a 1195-amino-acid chain: Voltage-gated inwardly rectifying potassium channel KCNH7 (1195 aa).

Topologically, residues 1-412 are cytoplasmic; it reads MPVRRGHVAP…YSPFKAVWDW (412 aa). A PAS domain is found at 41–70; the sequence is IIYCNDGFCEMTGFSRPDVMQKPCTCDFLH. A PAC domain is found at 92 to 144; that stretch reads RKVEVTYYHKNGSTFICNTHIIPVKNQEGVAMMFIINFEYVTDEENAATPERV. At Ser-174 the chain carries Phosphoserine. Residues 194–216 are disordered; it reads SVAMKHFKSPTKESCSPSEADDT. A phosphoserine mark is found at Ser-238 and Ser-319. Residues 413–433 traverse the membrane as a helical segment; sequence LILLLVIYTAIFTPYSAAFLL. At 434 to 449 the chain is on the extracellular side; the sequence is NDREEQKRRECGYSCS. A helical transmembrane segment spans residues 450–470; it reads PLNVVDLIVDIMFIIDILINF. Residues 471-494 are Cytoplasmic-facing; that stretch reads RTTYVNQNEEVVSDPAKIAIHYFK. Residues 495 to 515 traverse the membrane as a helical segment; the sequence is GWFLIDMVAAIPFDLLIFGSG. The Extracellular segment spans residues 516–521; sequence SDETTT. A helical; Voltage-sensor membrane pass occupies residues 522–542; it reads LIGLLKTARLLRLVRVARKLD. The Cytoplasmic portion of the chain corresponds to 543-549; it reads RYSEYGA. A helical transmembrane segment spans residues 550-570; it reads AVLMLLMCIFALIAHWLACIW. Residues 571 to 614 lie on the Extracellular side of the membrane; sequence YAIGNVERPYLTDKIGWLDSLGTQIGKRYNDSDSSSGPSIKDKY. Residue Asn-600 is glycosylated (N-linked (GlcNAc...) asparagine). An intramembrane region (pore-forming) is located at residues 615–635; sequence VTALYFTFSSLTSVGFGNVSP. The Selectivity filter signature appears at 627 to 632; it reads SVGFGN. At 636-641 the chain is on the extracellular side; that stretch reads NTNSEK. The helical transmembrane segment at 642-662 threads the bilayer; sequence IFSICVMLIGSLMYASIFGNV. Topologically, residues 663 to 1195 are cytoplasmic; that stretch reads SAIIQRLYSG…HVSDPGLPGK (533 aa). The cNMP-binding domain stretch occupies residues 745 to 845; sequence AFRGASKGCL…IQREDLLEVL (101 aa). The disordered stretch occupies residues 870–915; the sequence is AKSQSVNDSEGDTGKLRRRRLSFESEGEKDFSKENSANDADDSTDT. A compositionally biased stretch (basic and acidic residues) spans 890 to 902; the sequence is LSFESEGEKDFSK. Phosphoserine is present on residues Ser-891 and Ser-894. Positions 1027-1054 form a coiled coil; the sequence is YGEVEQRLDLLQEQLNRLESQMTTDIQA.

This sequence belongs to the potassium channel family. H (Eag) (TC 1.A.1.20) subfamily. Kv11.3/KCNH7 sub-subfamily. The potassium channel is probably composed of a homo- or heterotetrameric complex of pore-forming alpha subunits that can associate only within their subfamily.

The protein localises to the cell membrane. The enzyme catalyses K(+)(in) = K(+)(out). Functionally, pore-forming (alpha) subunit of voltage-gated inwardly rectifying potassium channel. Exhibits faster activation and deactivation kinetics and slow inactivation at membrane potentials positive to 240 mV, resulting in the weakest inward rectification. This chain is Voltage-gated inwardly rectifying potassium channel KCNH7, found in Mus musculus (Mouse).